The chain runs to 670 residues: E3 ubiquitin-protein ligase MAG2 (670 aa).

Disordered stretches follow at residues 1-84 and 124-145; these read MVEP…TSTR and EVEREKSRSSSSKKSNRRRDEH. The segment covering 20–39 has biased composition (polar residues); that stretch reads DTLNATSNSSKQGVSNNKRN. Basic and acidic residues predominate over residues 51–66; it reads SDGRDNAHNYHGEGRR. The RING-type zinc-finger motif lies at 195-250; it reads CSICLSEEPVAPRMVTCGHIFCLSCLLNFFSIEETVKNKETGYSKKKKYKECPLCG. The segment at 609–670 is disordered; the sequence is TEDEKASKEN…LFSSNHQALG (62 aa). Over residues 610–622 the composition is skewed to basic and acidic residues; sequence EDEKASKENKEFQ. Positions 637–649 are enriched in low complexity; sequence VTDSTDSPPTSNG.

The protein belongs to the RNF10 family.

Its subcellular location is the cytoplasm. It catalyses the reaction S-ubiquitinyl-[E2 ubiquitin-conjugating enzyme]-L-cysteine + [acceptor protein]-L-lysine = [E2 ubiquitin-conjugating enzyme]-L-cysteine + N(6)-ubiquitinyl-[acceptor protein]-L-lysine.. It participates in protein modification; protein ubiquitination. Functionally, E3 ubiquitin-protein ligase involved in the degradation of non-functional 18S rRNAs in response to stalled ribosomes. Catalyzes monoubiquitination of RPS3/uS3 in response to stalled ribosomes, initiating a HEL2-dependent response that activates the degradation of non-functional 18S rRNAs. In Saccharomyces cerevisiae (strain ATCC 204508 / S288c) (Baker's yeast), this protein is E3 ubiquitin-protein ligase MAG2.